We begin with the raw amino-acid sequence, 353 residues long: MITVKPGSVVFENVRKTFGAFTAIPDLSLTIEPGTLVTLLGPSGCGKTTTLRMLAGLEHPNSGRILIGGKDVTMLPANERDVSMVFQSYALFPHMSALDNVAYGLQSSGLKKAEAREKAEEGLKLVGLAGMGHRLPAELSGGQQQRVAVARALVLEPQVLLLDEPLSNLDARLRRRVRTDIRELQQRIGFTAVYVTHDQDEALAVSDRIIVMKEGEIAQSGAPRELYEAPASSFIADFMGEANVVPCEVVSQTGDESLVRVGTMEHRVRSRGPRSGSAKLAVRPGAITIGAAGGSGMPGRVLHTAYLGGHIEYEVETEVGTLFIIDHEMNHTQRETSDVTLNFKNRGIALIDA.

The ABC transporter domain occupies 9–239; sequence VVFENVRKTF…PASSFIADFM (231 aa). 41–48 provides a ligand contact to ATP; the sequence is GPSGCGKT.

This sequence belongs to the ABC transporter superfamily. Fe(3+) ion importer (TC 3.A.1.10) family. The complex is composed of two ATP-binding proteins (FbpC), two transmembrane proteins (FbpB) and a solute-binding protein (FbpA).

It is found in the cell inner membrane. It carries out the reaction Fe(3+)(out) + ATP + H2O = Fe(3+)(in) + ADP + phosphate + H(+). Functionally, part of the ABC transporter complex FbpABC involved in Fe(3+) ions import. Responsible for energy coupling to the transport system. In Agrobacterium fabrum (strain C58 / ATCC 33970) (Agrobacterium tumefaciens (strain C58)), this protein is Fe(3+) ions import ATP-binding protein FbpC.